A 371-amino-acid polypeptide reads, in one-letter code: Glycosyltransferase 8 domain-containing protein 1 (371 aa).

The Cytoplasmic portion of the chain corresponds to 1–7 (MSFRKVH). The helical; Signal-anchor for type II membrane protein transmembrane segment at 8 to 28 (IAIILLAAVVFLLILHHNILG) threads the bilayer. The Lumenal segment spans residues 29-371 (LTDILTRQSS…RRHGEADGTK (343 aa)). N-linked (GlcNAc...) asparagine glycosylation is found at Asn-104, Asn-249, and Asn-257.

This sequence belongs to the glycosyltransferase 8 family.

The protein localises to the membrane. This chain is Glycosyltransferase 8 domain-containing protein 1 (glt8d1), found in Xenopus tropicalis (Western clawed frog).